Consider the following 434-residue polypeptide: SPARC-related modular calcium-binding protein 1 (434 aa).

A signal peptide spans 1–26 (MLPARCARLLTPHLLLVLVQLSPARG). One can recognise a Kazal-like domain in the interval 37 to 89 (SDRDPQCNLHCSRTQPKPICASDGRSYESMCEYQRAKCRDPTLGVVHRGRCKD). Cystine bridges form between Cys-43/Cys-74, Cys-47/Cys-67, Cys-56/Cys-87, Cys-95/Cys-118, Cys-129/Cys-136, and Cys-138/Cys-158. The Thyroglobulin type-1 1 domain maps to 92-158 (QSKCRLERAQ…SSVQNKTPVC (67 aa)). Over residues 149–172 (SSVQNKTPVCSGSVTDKPLSQGNS) the composition is skewed to polar residues. A disordered region spans residues 149-191 (SSVQNKTPVCSGSVTDKPLSQGNSGRKDDGSKPTPTMETQPVF). A glycan (N-linked (GlcNAc...) asparagine) is linked at Asn-214. The 69-residue stretch at 224–292 (VYSCDQERQS…TSTRYVMPSC (69 aa)) folds into the Thyroglobulin type-1 2 domain. 3 disulfide bridges follow: Cys-227–Cys-251, Cys-262–Cys-269, and Cys-271–Cys-292. 2 EF-hand domains span residues 359-394 (LEER…VKKK) and 396-431 (KPKK…SKEG). 9 residues coordinate Ca(2+): Asp-372, Asn-374, Ser-376, Asp-378, Glu-383, Asp-409, Asn-411, Asp-413, and Glu-420. Asn-374 carries an N-linked (GlcNAc...) asparagine glycan.

In terms of processing, glycosylated. Widely expressed in many tissues with a strongest signal in ovary. No expression in spleen.

The protein resides in the secreted. Its subcellular location is the extracellular space. It is found in the extracellular matrix. The protein localises to the basement membrane. In terms of biological role, plays essential roles in both eye and limb development. Probable regulator of osteoblast differentiation. This chain is SPARC-related modular calcium-binding protein 1 (SMOC1), found in Homo sapiens (Human).